The primary structure comprises 983 residues: Protein translocase subunit SecA (983 aa).

Residues Gln-83, 101-105 (GEGKT), and Asp-489 each bind ATP. The segment at 948-983 (ISSEEEDNNEKTNINNNEDLERTKGEAQQTAKNPNE) is disordered. Residues 973–983 (EAQQTAKNPNE) show a composition bias toward polar residues.

The protein belongs to the SecA family. As to quaternary structure, monomer and homodimer. Part of the essential Sec protein translocation apparatus which comprises SecA, SecYEG and auxiliary proteins SecDF. Other proteins may also be involved.

The protein localises to the cell membrane. It localises to the cytoplasm. The enzyme catalyses ATP + H2O + cellular proteinSide 1 = ADP + phosphate + cellular proteinSide 2.. In terms of biological role, part of the Sec protein translocase complex. Interacts with the SecYEG preprotein conducting channel. Has a central role in coupling the hydrolysis of ATP to the transfer of proteins into and across the cell membrane, serving as an ATP-driven molecular motor driving the stepwise translocation of polypeptide chains across the membrane. The sequence is that of Protein translocase subunit SecA from Mesomycoplasma hyopneumoniae (strain J / ATCC 25934 / NCTC 10110) (Mycoplasma hyopneumoniae).